Consider the following 84-residue polypeptide: UPF0297 protein Csac_1773 (84 aa).

It belongs to the UPF0297 family.

This chain is UPF0297 protein Csac_1773, found in Caldicellulosiruptor saccharolyticus (strain ATCC 43494 / DSM 8903 / Tp8T 6331).